The following is a 274-amino-acid chain: Membrane protein insertase YidC 2 (274 aa).

The N-terminal stretch at 1 to 20 (MKKKLKLTSLLGLSLLIMTA) is a signal peptide. C21 is lipidated: N-palmitoyl cysteine. C21 is lipidated: S-diacylglycerol cysteine. The next 4 helical transmembrane spans lie at 56–76 (ISIGVGIILFTVLIRTVLLPV), 128–148 (SDSLWPILIQMPVILALFQAL), 167–187 (VDTTLVLPILAAVFTFLSTWL), and 205–225 (GIPVLIFIFAVYAPGGVALYW).

It belongs to the OXA1/ALB3/YidC family. Type 2 subfamily.

The protein localises to the cell membrane. Functionally, required for the insertion and/or proper folding and/or complex formation of integral membrane proteins into the membrane. Involved in integration of membrane proteins that insert both dependently and independently of the Sec translocase complex, as well as at least some lipoproteins. The protein is Membrane protein insertase YidC 2 of Streptococcus pneumoniae serotype 4 (strain ATCC BAA-334 / TIGR4).